The following is a 356-amino-acid chain: Formate-nitrite transporter (356 aa).

The Cytoplasmic segment spans residues 1–108 (MPREKPRADE…TKATYPIMKM (108 aa)). A helical membrane pass occupies residues 109–129 (FSLSVLAGMLLSVGGLLSITI). Topologically, residues 130 to 142 (GKGIPSSDIGIQK) are extracellular. Residues 143 to 163 (IVFGFFNSVGLNLVVLCGGEL) form a helical membrane-spanning segment. Residues 164–182 (FTSNCAFLIPGFMEGAYSR) lie on the Cytoplasmic side of the membrane. A helical membrane pass occupies residues 183-203 (WLFFKTHFVVYFGNLVGSIFV). Topologically, residues 204 to 237 (STYFGKLLGSFESPMYLSAVKQIGETKVAMNWGR) are extracellular. The helical transmembrane segment at 238–258 (ALLSGIGCNWLVCCAVYFSAS) threads the bilayer. The Cytoplasmic portion of the chain corresponds to 259–265 (AKDLLSK). A helical membrane pass occupies residues 266–286 (LVVISFLVLTFASLEFENCVG). At 287 to 310 (NMFLLSLSHMYGGNFTLGQWILNN) the chain is on the extracellular side. A helical transmembrane segment spans residues 311 to 331 (LIPVSIGNFIGGTFLLGIPLW). Residues 332-356 (YVHVSNVYNIPFLDPLYQQSQAKTQ) lie on the Cytoplasmic side of the membrane.

This sequence belongs to the FNT transporter (TC 1.A.16) family. Homopentamer.

The protein localises to the membrane. It carries out the reaction (S)-lactate(in) + H(+)(in) = (S)-lactate(out) + H(+)(out). It catalyses the reaction formate(in) + H(+)(in) = formate(out) + H(+)(out). The catalysed reaction is pyruvate(out) + H(+)(out) = pyruvate(in) + H(+)(in). The enzyme catalyses acetate(out) + H(+)(out) = acetate(in) + H(+)(in). Functionally, monocarboxylate-proton symporter; active in acidic-to-neutral pH range. Transports formate, acetate and L-lactate. This Entamoeba histolytica (strain ATCC 30459 / HM-1:IMSS / ABRM) protein is Formate-nitrite transporter.